A 492-amino-acid chain; its full sequence is ATP synthase subunit beta, chloroplastic (492 aa).

170–177 (GGAGVGKT) is a binding site for ATP.

Belongs to the ATPase alpha/beta chains family. As to quaternary structure, F-type ATPases have 2 components, CF(1) - the catalytic core - and CF(0) - the membrane proton channel. CF(1) has five subunits: alpha(3), beta(3), gamma(1), delta(1), epsilon(1). CF(0) has four main subunits: a(1), b(1), b'(1) and c(9-12).

Its subcellular location is the plastid. It is found in the chloroplast thylakoid membrane. It catalyses the reaction ATP + H2O + 4 H(+)(in) = ADP + phosphate + 5 H(+)(out). Functionally, produces ATP from ADP in the presence of a proton gradient across the membrane. The catalytic sites are hosted primarily by the beta subunits. The polypeptide is ATP synthase subunit beta, chloroplastic (Angiopteris evecta (Mule's foot fern)).